Reading from the N-terminus, the 218-residue chain is Uracil-DNA glycosylase (218 aa).

Aspartate 68 (proton acceptor) is an active-site residue.

It belongs to the uracil-DNA glycosylase (UDG) superfamily. UNG family. As to quaternary structure, homodimer. Interacts with protein OPG148. Component of the Uracil-DNA glycosylase(UDG)-OPG148-polymerase complex; OPG148 and UDG form a heterodimeric processivity factor that associates with OPG71 to form the processive polymerase holoenzyme.

The enzyme catalyses Hydrolyzes single-stranded DNA or mismatched double-stranded DNA and polynucleotides, releasing free uracil.. In terms of biological role, plays an essential role in viral replication as a component of the DNA polymerase processivity factor. Excises uracil residues from the DNA which can arise as a result of misincorporation of dUMP residues by DNA polymerase or due to deamination of cytosine. This is Uracil-DNA glycosylase (OPG116) from Variola virus.